Consider the following 96-residue polypeptide: MNIRPLHDRVIIKREEVETRSAGGIVLTGSAATKSTRAKVLAVGKGRILENGTVQPLDVKIGDTVIFNDGYGVKAEKIDGEEVLIISENDILAIVE.

The protein belongs to the GroES chaperonin family. As to quaternary structure, heptamer of 7 subunits arranged in a ring. Interacts with the chaperonin GroEL.

Its subcellular location is the cytoplasm. Functionally, together with the chaperonin GroEL, plays an essential role in assisting protein folding. The GroEL-GroES system forms a nano-cage that allows encapsulation of the non-native substrate proteins and provides a physical environment optimized to promote and accelerate protein folding. GroES binds to the apical surface of the GroEL ring, thereby capping the opening of the GroEL channel. This is Co-chaperonin GroES from Histophilus somni (strain 129Pt) (Haemophilus somnus).